We begin with the raw amino-acid sequence, 257 residues long: UPF0246 protein ACICU_02469 (257 aa).

Belongs to the UPF0246 family.

This chain is UPF0246 protein ACICU_02469, found in Acinetobacter baumannii (strain ACICU).